A 95-amino-acid chain; its full sequence is Protein J1 homolog (95 aa).

Belongs to the chordopoxvirinae J1 family. Homodimer. Part of a complex composed of A30, G7, F10 kinase, A15, D2, D3, and J1. Interacts with A45.

It is found in the virion. Its subcellular location is the host cytoplasm. Functionally, late protein which is a part of a large complex required for early virion morphogenesis. This complex participates in the formation of virosomes and the incorporation of virosomal contents into nascent immature virions. J1 protein is required for DNA packaging during immature virions (IV) formation. This Sus scrofa (Pig) protein is Protein J1 homolog.